A 776-amino-acid chain; its full sequence is Mitochondrial intermediate peptidase (776 aa).

A mitochondrion-targeting transit peptide spans 1-28 (MRRFSTLSRRLQRVVPASSASTANTSPS). Residue histidine 561 coordinates Zn(2+). Glutamate 562 is an active-site residue. Zn(2+)-binding residues include histidine 565 and histidine 568.

Belongs to the peptidase M3 family. Zn(2+) serves as cofactor.

The protein localises to the mitochondrion matrix. It carries out the reaction Release of an N-terminal octapeptide as second stage of processing of some proteins imported into the mitochondrion.. Its function is as follows. Cleaves proteins, imported into the mitochondrion, to their mature size. While most mitochondrial precursor proteins are processed to the mature form in one step by mitochondrial processing peptidase (MPP), the sequential cleavage by MIP of an octapeptide after initial processing by MPP is a required step for a subgroup of nuclear-encoded precursor proteins destined for the matrix or the inner membrane. The protein is Mitochondrial intermediate peptidase (OCT1) of Yarrowia lipolytica (strain CLIB 122 / E 150) (Yeast).